Reading from the N-terminus, the 230-residue chain is 3-beta-hydroxysteroid-Delta(8),Delta(7)-isomerase (230 aa).

Thr-2 is subject to N-acetylthreonine. Helical transmembrane passes span 29-49 (SHIL…TWLL), 66-86 (LCWF…FSLY), 121-141 (METV…IAFL), and 185-205 (FWFY…ILVL). Residues 61–204 (GRRLALCWFA…VWLVIPSILV (144 aa)) enclose the EXPERA domain.

It belongs to the EBP family.

The protein localises to the endoplasmic reticulum membrane. The protein resides in the nucleus envelope. It localises to the cytoplasmic vesicle. It carries out the reaction lathosterol = 5alpha-cholest-8-en-3beta-ol. The enzyme catalyses zymosterol = 5alpha-cholesta-7,24-dien-3beta-ol. It catalyses the reaction 5,6alpha-epoxy-5alpha-cholestan-3beta-ol + H2O = 5alpha-cholestane-3beta,5,6beta-triol. The catalysed reaction is 5,6beta-epoxy-5beta-cholestan-3beta-ol + H2O = 5alpha-cholestane-3beta,5,6beta-triol. It functions in the pathway steroid biosynthesis; cholesterol biosynthesis. Its function is as follows. Isomerase that catalyzes the conversion of Delta(8)-sterols to their corresponding Delta(7)-isomers. In terms of biological role, component of the microsomal antiestrogen binding site (AEBS), a multiproteic complex at the ER membrane that consists of an association between EBP and 7-dehydrocholesterol reductase/DHCR7. This complex is responsible for cholesterol-5,6-epoxide hydrolase (ChEH) activity, which consists in the hydration of cholesterol-5,6-epoxides (5,6-EC) into cholestane-3beta,5alpha,6beta-triol (CT). The precise role of each component of this complex has not been described yet. This is 3-beta-hydroxysteroid-Delta(8),Delta(7)-isomerase from Mus musculus (Mouse).